Consider the following 98-residue polypeptide: MTKSELVELIASKQTQLSVKDVELAVKSIIEHMSQSLADGQRIEIRGFGSFSLHHRAARTGRNPKTGDAVQLPAKFVPHFKPGKELREQVNDSMKKGF.

It belongs to the bacterial histone-like protein family. As to quaternary structure, heterodimer of an alpha and a beta chain.

Its function is as follows. This protein is one of the two subunits of integration host factor, a specific DNA-binding protein that functions in genetic recombination as well as in transcriptional and translational control. The polypeptide is Integration host factor subunit beta (Marinobacter nauticus (strain ATCC 700491 / DSM 11845 / VT8) (Marinobacter aquaeolei)).